We begin with the raw amino-acid sequence, 147 residues long: Membrane-spanning 4-domains subfamily A member 6E (147 aa).

Topologically, residues 1 to 52 (MTSQPISNETIIMLPSNVINFSQAEKPEPTNQGQDSLKKRLQAKVKVIGVHS) are cytoplasmic. Residues 53-73 (SLAGSILSALSALVGFILLSV) traverse the membrane as a helical segment. At 74–120 (NPAALNPASLQCKLDEKDIPTRLLLSYDYHSPYTMDCHRAKASLAGT) the chain is on the extracellular side. A helical membrane pass occupies residues 121–141 (LSLMLVSTVLEFCLAVLTAVL). At 142–147 (QWKQTV) the chain is on the cytoplasmic side.

It belongs to the MS4A family. As to expression, expressed by malignant and fetal tissue at very low levels.

The protein resides in the membrane. Its function is as follows. May be involved in signal transduction as a component of a multimeric receptor complex. This is Membrane-spanning 4-domains subfamily A member 6E (MS4A6E) from Homo sapiens (Human).